A 276-amino-acid chain; its full sequence is NAD-capped RNA hydrolase NudC (276 aa).

Arg-82 serves as a coordination point for substrate. Residues Cys-112 and Cys-115 each contribute to the Zn(2+) site. Glu-125 is a binding site for substrate. Zn(2+) contacts are provided by Cys-130 and Cys-133. Tyr-138 contributes to the substrate binding site. The Nudix hydrolase domain maps to 139–262 (PRISPSMIVL…SIARYLIDLY (124 aa)). The a divalent metal cation site is built by Ala-172, Glu-188, and Glu-192. Positions 173–194 (GFAEPGESAEDCLVREVREEVA) match the Nudix box motif. Position 206–213 (206–213 (QCWPFPHS)) interacts with substrate. Glu-233 contributes to the a divalent metal cation binding site. Substrate is bound at residue Ala-255.

The protein belongs to the Nudix hydrolase family. NudC subfamily. Homodimer. Mg(2+) is required as a cofactor. It depends on Mn(2+) as a cofactor. The cofactor is Zn(2+).

It carries out the reaction a 5'-end NAD(+)-phospho-ribonucleoside in mRNA + H2O = a 5'-end phospho-adenosine-phospho-ribonucleoside in mRNA + beta-nicotinamide D-ribonucleotide + 2 H(+). The catalysed reaction is NAD(+) + H2O = beta-nicotinamide D-ribonucleotide + AMP + 2 H(+). The enzyme catalyses NADH + H2O = reduced beta-nicotinamide D-ribonucleotide + AMP + 2 H(+). In terms of biological role, mRNA decapping enzyme that specifically removes the nicotinamide adenine dinucleotide (NAD) cap from a subset of mRNAs by hydrolyzing the diphosphate linkage to produce nicotinamide mononucleotide (NMN) and 5' monophosphate mRNA. The NAD-cap is present at the 5'-end of some mRNAs and stabilizes RNA against 5'-processing. Has preference for mRNAs with a 5'-end purine. Catalyzes the hydrolysis of a broad range of dinucleotide pyrophosphates. The polypeptide is NAD-capped RNA hydrolase NudC (Pseudomonas putida (strain ATCC 47054 / DSM 6125 / CFBP 8728 / NCIMB 11950 / KT2440)).